The chain runs to 157 residues: MYCPFCNAEDTKVIDSRLVEEGTQVRRRRECLKCQERFTTFETAELNLPRIIKRDGRRSAFDEEKLRAGLLKALEKRPISTEQIETAVQRIIHKLRARGECEVSSQWLGELVMDELRALDEVAYVRFASVYRSFQDINAFRDEIRRLQKQQKKSHDK.

Residues 3-34 (CPFCNAEDTKVIDSRLVEEGTQVRRRRECLKC) fold into a zinc finger. Residues 49 to 139 (PRIIKRDGRR…VYRSFQDINA (91 aa)) enclose the ATP-cone domain.

It belongs to the NrdR family. Zn(2+) is required as a cofactor.

In terms of biological role, negatively regulates transcription of bacterial ribonucleotide reductase nrd genes and operons by binding to NrdR-boxes. In Coxiella burnetii (strain CbuK_Q154) (Coxiella burnetii (strain Q154)), this protein is Transcriptional repressor NrdR.